Reading from the N-terminus, the 236-residue chain is MTKTTLLHEGKAKKVFLTDQSDLVIQEFKDDATAFNNKKKGTIADKGVVNNAISCRLFTLLEEHGIRTHLVEKLSDRDMLCKRLDIIKVEVVVRNIAAGSLVKRYGFKEGFVLQEPLVEFYLKDDDLDDPLMNDFHAVALGVATSEELAILRSRAEAINLVLRQFFADRKLKLVDFKLEFGRHKNEILLGDEISPDTCRFWDLDTNEKMDKDRFRFDMGGVENAYSEVQKRVLELD.

This sequence belongs to the SAICAR synthetase family.

It carries out the reaction 5-amino-1-(5-phospho-D-ribosyl)imidazole-4-carboxylate + L-aspartate + ATP = (2S)-2-[5-amino-1-(5-phospho-beta-D-ribosyl)imidazole-4-carboxamido]succinate + ADP + phosphate + 2 H(+). Its pathway is purine metabolism; IMP biosynthesis via de novo pathway; 5-amino-1-(5-phospho-D-ribosyl)imidazole-4-carboxamide from 5-amino-1-(5-phospho-D-ribosyl)imidazole-4-carboxylate: step 1/2. The polypeptide is Phosphoribosylaminoimidazole-succinocarboxamide synthase (Chlorobium phaeobacteroides (strain DSM 266 / SMG 266 / 2430)).